The following is a 259-amino-acid chain: MYELKKSKKSKARFFSTTSTYFSYRKHQLFKFYIPKNPSRNNTGKVSMRCKRKKFKNLDLAINYARIEMGRNCLITKLSFWKEKKPYVALVRDSYNSLSYYIAPAGFFVGRTLKTLPTKHDYYKKGGWKFYIRGLGTYVMLRVLRVNDVIFNLLSPSRVLYRLALAAGTYFKILYQSFCKTFYVMTIPSGLIIRVPSEGLAVMGRNSNTQNNKRVLGLAGVNFFNGTNPRVRGVAMNPVDHPNGGRTKTPKPERSPGVE.

The segment at 234 to 259 (VAMNPVDHPNGGRTKTPKPERSPGVE) is disordered. Positions 250–259 (PKPERSPGVE) are enriched in basic and acidic residues.

It belongs to the universal ribosomal protein uL2 family.

The protein localises to the mitochondrion. This chain is Large ribosomal subunit protein uL2m (RPL2), found in Paramecium tetraurelia.